Consider the following 631-residue polypeptide: RING finger protein 112 (631 aa).

Residues 57–98 form an RING-type zinc finger; it reads CSICLERLREPISLDCGHDFCIRCFSTHRIPGCELPCCPECR. The segment at 131 to 631 is interaction with ZBTB16; the sequence is AVRAERLLLV…GDREPLLQEE (501 aa). In terms of domain architecture, GB1/RHD3-type G spans 166-397; that stretch reads DTPVCLLAVL…YISDVLSTAP (232 aa). 317–318 contributes to the GTP binding site; that stretch reads RD. 2 consecutive transmembrane segments (helical) span residues 547 to 567 and 580 to 600; these read LAAV…GVVG and GMVA…GGGV.

Belongs to the TRAFAC class dynamin-like GTPase superfamily. GB1/RHD3 GTPase family. GB1 subfamily. Self-associates. Interacts with SP1 in an oxidative stress-regulated manner. Interacts with SIGMAR1 in an oxidative stress-regulated manner. Interacts with ZBTB16 (via C2H2-type zinc finger domains 1 and 2). In terms of processing, auto-ubiquitinated. As to expression, predominantly expressed in brain.

The protein localises to the membrane. It is found in the cytoplasm. Its subcellular location is the nucleus. It localises to the nuclear body. The protein resides in the nucleoplasm. The protein localises to the endosome. It is found in the cytoplasmic vesicle. Its subcellular location is the secretory vesicle. It localises to the synaptic vesicle. The protein resides in the postsynaptic density. The protein localises to the perikaryon. It is found in the cell projection. Its subcellular location is the neuron projection. The enzyme catalyses S-ubiquitinyl-[E2 ubiquitin-conjugating enzyme]-L-cysteine + [acceptor protein]-L-lysine = [E2 ubiquitin-conjugating enzyme]-L-cysteine + N(6)-ubiquitinyl-[acceptor protein]-L-lysine.. It functions in the pathway protein modification; protein ubiquitination. E3 ubiquitin-protein ligase that plays an important role in neuronal differentiation, including neurogenesis and gliogenesis, during brain development. During embryonic development initiates neuronal differentiation by inducing cell cycle arrest at the G0/G1 phase through up-regulation of cell-cycle regulatory proteins. Plays a role not only in the fetal period during the development of the nervous system, but also in the adult brain, where it is involved in the maintenance of neural functions and protection of the nervous tissue cells from oxidative stress-induced damage. Exhibits GTPase and E3 ubiquitin-protein ligase activities. Regulates dendritic spine density and synaptic neurotransmission; its ability to hydrolyze GTP is involved in the maintenance of dendritic spine density. The protein is RING finger protein 112 (Rnf112) of Rattus norvegicus (Rat).